The primary structure comprises 306 residues: [methyl-Co(III) glycine betaine-specific corrinoid protein]--tetrahydrofolate methyltransferase (306 aa).

The protein belongs to the MtrH family.

The enzyme catalyses methyl-Co(III)-[glycine betaine-specific corrinoid protein] + (6S)-5,6,7,8-tetrahydrofolate = Co(I)-[glycine betaine-specific corrinoid protein] + (6S)-5-methyl-5,6,7,8-tetrahydrofolate + H(+). In terms of biological role, methyltransferase able to catalyze the transfer of a methyl group from methylcobalamin (methylCbl) to tetrahydrofolate (THF) in vitro, to generate methyl-THF and cob(I)alamin. In vivo, the methyl group probably comes from the adjacently encoded methylated corrinoid protein DSY3155. The methyl group may then be ultimately converted to carbon dioxide, and its oxidation would also provide reducing equivalents for anaerobic respiration. Thus, may function in the pathway that allows anaerobic methylotrophic growth of D.hafniense using glycine betaine. The chain is [methyl-Co(III) glycine betaine-specific corrinoid protein]--tetrahydrofolate methyltransferase from Desulfitobacterium hafniense (strain Y51).